Here is a 478-residue protein sequence, read N- to C-terminus: Dihydrolipoyl dehydrogenase (478 aa).

FAD contacts are provided by residues 36–45 (ERYSTLGGVC), K54, and A117. C45 and C50 are oxidised to a cystine. NAD(+) contacts are provided by residues 183–187 (GGGII), E206, V239, and 270–273 (AIGR). Residues D313 and A321 each coordinate FAD. The Proton acceptor role is filled by H445.

This sequence belongs to the class-I pyridine nucleotide-disulfide oxidoreductase family. As to quaternary structure, homodimer. The cofactor is FAD.

It localises to the cytoplasm. The enzyme catalyses N(6)-[(R)-dihydrolipoyl]-L-lysyl-[protein] + NAD(+) = N(6)-[(R)-lipoyl]-L-lysyl-[protein] + NADH + H(+). In terms of biological role, lipoamide dehydrogenase is a component of the alpha-ketoacid dehydrogenase complexes. The sequence is that of Dihydrolipoyl dehydrogenase (lpdA) from Haemophilus influenzae (strain ATCC 51907 / DSM 11121 / KW20 / Rd).